The primary structure comprises 1348 residues: Vascular endothelial growth factor receptor 2 (1348 aa).

The N-terminal stretch at 1–20 is a signal peptide; it reads MELGPLRVLTVLLCLAPVFA. Topologically, residues 21-756 are extracellular; the sequence is GLFISMDQPT…GAEEKTNLEL (736 aa). Asn-43, Asn-47, Asn-63, Asn-93, Asn-138, Asn-153, Asn-201, Asn-240, Asn-290, Asn-310, Asn-365, Asn-386, Asn-513, Asn-556, Asn-603, Asn-613, Asn-622, Asn-666, Asn-688, and Asn-710 each carry an N-linked (GlcNAc...) asparagine glycan. Ig-like C2-type domains lie at 43-106, 138-202, 220-312, 320-405, 412-534, 540-651, and 658-744; these read NDTL…GDSQ, NKTV…IDNE, DLTM…KNSS, PFIH…HTFT, PQIG…RVIS, GLEI…KHLT, and PRLV…AFFS. Cys-50 and Cys-100 form a disulfide bridge. An intrachain disulfide couples Cys-145 to Cys-195. Cys-241 and Cys-299 form a disulfide bridge. An intrachain disulfide couples Cys-436 to Cys-520. Cys-561 and Cys-633 form a disulfide bridge. Cysteines 679 and 728 form a disulfide. Residues 757–777 traverse the membrane as a helical segment; sequence IILVGTAVIAMFFWLLLVIIL. Residues 778–1348 are Cytoplasmic-facing; it reads RTVKRANGGD…SPAPVASLPL (571 aa). The 331-residue stretch at 825–1155 folds into the Protein kinase domain; that stretch reads LKLGKPLGRG…FSELVEHLGN (331 aa). Residues 831 to 839 and Lys-859 each bind ATP; that span reads LGRGAFGQV. Residues 958-967 show a composition bias toward low complexity; sequence ITSSQSSTSS. Residues 958 to 983 are disordered; it reads ITSSQSSTSSGFVEERSLSDVEEEDA. Asp-1021 (proton acceptor) is an active-site residue. Phosphotyrosine; by autocatalysis is present on residues Tyr-1047, Tyr-1052, Tyr-1168, and Tyr-1207. Residues 1280-1302 form a disordered region; it reads PSKSNESVMSEASNQTSGYQSGY.

It belongs to the protein kinase superfamily. Tyr protein kinase family. CSF-1/PDGF receptor subfamily. Autophosphorylated on tyrosine residues upon ligand binding. Autophosphorylation occurs in trans, i.e. one subunit of the dimeric receptor phosphorylates tyrosine residues on the other subunit. In all endothelial tissues during onset of vascularization. In later development, present in lung, heart, intestine and skin.

It is found in the cell membrane. It localises to the cytoplasmic vesicle. The protein resides in the early endosome. The protein localises to the cell junction. Its subcellular location is the endoplasmic reticulum. It carries out the reaction L-tyrosyl-[protein] + ATP = O-phospho-L-tyrosyl-[protein] + ADP + H(+). With respect to regulation, present in an inactive conformation in the absence of bound ligand. Binding of VEGFA, VEGFC or VEGFD leads to dimerization and activation by autophosphorylation on tyrosine residues. In terms of biological role, tyrosine-protein kinase that acts as a cell-surface receptor for VEGFA, VEGFC and/or VEGFD and plays an essential role in the regulation of angiogenesis and vascular development. Promotes proliferation, survival, migration and differentiation of endothelial cells. Promotes reorganization of the actin cytoskeleton. Binding of vascular growth factors leads to the activation of several signaling cascades. Activation of PLCG1 leads to the production of the cellular signaling molecules diacylglycerol and inositol 1,4,5-trisphosphate and the activation of protein kinase C. Mediates activation of MAPK1/ERK2, MAPK3/ERK1 and the MAP kinase signaling pathway, as well as of the AKT1 signaling pathway. Mediates phosphorylation of PIK3R1, the regulatory subunit of phosphatidylinositol 3-kinase, reorganization of the actin cytoskeleton and activation of PTK2/FAK1. Required for VEGFA-mediated induction of NOS2 and NOS3, leading to the production of the signaling molecule nitric oxide (NO) by endothelial cells. This Coturnix japonica (Japanese quail) protein is Vascular endothelial growth factor receptor 2.